We begin with the raw amino-acid sequence, 1016 residues long: Protein kinase C-like 2 (1016 aa).

The REM-1 1 domain occupies 1-68; sequence MDMIDEAITE…LEKLKLRKNG (68 aa). Residues 68–101 form a disordered region; the sequence is GVRKSNSEKPSVGIEKNPSFSTTKSAKSFSSTSS. The segment covering 86 to 101 has biased composition (low complexity); that stretch reads SFSTTKSAKSFSSTSS. The region spanning 111-188 is the REM-1 2 domain; sequence NYDTPLTISK…LKRYHDLHIE (78 aa). Positions 195 to 307 constitute a C2 domain; sequence PSTESRGNLN…VEKQRRKKVE (113 aa). 2 Phorbol-ester/DAG-type zinc fingers span residues 405-453 and 473-523; these read GHKF…VTKC and PHHF…PDFC. A disordered region spans residues 543–602; sequence YKAQQHKQKSSHHKHHHHKKSKSSSSKHKENDKASVSITTTTTPSITPADPVPTSPKPLA. Basic residues predominate over residues 546–568; sequence QQHKQKSSHHKHHHHKKSKSSSS. Positions 579 to 590 are enriched in low complexity; the sequence is SITTTTTPSITP. The region spanning 683–942 is the Protein kinase domain; sequence FTFLSVLGKG…AEDVMTHPFF (260 aa). Residues 689–697 and Lys-712 contribute to the ATP site; that span reads LGKGNFGKV. The active-site Proton acceptor is the Asp-808. Residues 943–1013 form the AGC-kinase C-terminal domain; that stretch reads SNINWDDIYH…SCEDDKPSTT (71 aa). Thr-984 is subject to Phosphothreonine.

This sequence belongs to the protein kinase superfamily. AGC Ser/Thr protein kinase family. PKC subfamily. As to quaternary structure, interacts with rho2.

The enzyme catalyses L-seryl-[protein] + ATP = O-phospho-L-seryl-[protein] + ADP + H(+). It carries out the reaction L-threonyl-[protein] + ATP = O-phospho-L-threonyl-[protein] + ADP + H(+). Its function is as follows. Involved in the control of the cell shape. Target of the inhibitor staurosporine. In Schizosaccharomyces pombe (strain 972 / ATCC 24843) (Fission yeast), this protein is Protein kinase C-like 2 (pck2).